The primary structure comprises 226 residues: CASP-like protein 2BC1 (226 aa).

Residues methionine 1 to glutamate 37 are Cytoplasmic-facing. Residues valine 38–alanine 58 traverse the membrane as a helical segment. At serine 59 to lysine 78 the chain is on the extracellular side. A helical membrane pass occupies residues threonine 79–leucine 99. Residues arginine 100 to lysine 114 are Cytoplasmic-facing. A helical membrane pass occupies residues alanine 115 to alanine 135. Topologically, residues alanine 136 to alanine 170 are extracellular. A helical membrane pass occupies residues glycine 171–phenylalanine 191. Residues histidine 192–isoleucine 226 lie on the Cytoplasmic side of the membrane.

This sequence belongs to the Casparian strip membrane proteins (CASP) family. Homodimer and heterodimers.

It localises to the cell membrane. This is CASP-like protein 2BC1 from Picea sitchensis (Sitka spruce).